Here is a 190-residue protein sequence, read N- to C-terminus: Transcription antitermination protein NusB (190 aa).

Residues 135–190 are disordered; sequence APAPESVAEEADEESSDSAAAASEPTDEGDVSDSPDSSGASDEPAAPSAEIQPTVD. Positions 141–150 are enriched in acidic residues; it reads VAEEADEESS.

Belongs to the NusB family.

Involved in transcription antitermination. Required for transcription of ribosomal RNA (rRNA) genes. Binds specifically to the boxA antiterminator sequence of the ribosomal RNA (rrn) operons. This chain is Transcription antitermination protein NusB, found in Bifidobacterium longum (strain DJO10A).